The following is a 177-amino-acid chain: Cytochrome c-type biogenesis protein CcmE (177 aa).

Residues 1–8 are Cytoplasmic-facing; that stretch reads MNPRRKSR. A helical; Signal-anchor for type II membrane protein membrane pass occupies residues 9-29; sequence LKVVMAVLSGLAVAVGLTLYA. Topologically, residues 30 to 177 are periplasmic; that stretch reads LSQNIDLFYT…QISQPFGENK (148 aa). The heme site is built by H131 and Y135. Positions 134–177 are disordered; that stretch reads NYMPPELGDQMKKQHQPMGISEADLKGKSERDATQISQPFGENK. The segment covering 156–166 has biased composition (basic and acidic residues); that stretch reads ADLKGKSERDA. Residues 167–177 show a composition bias toward polar residues; that stretch reads TQISQPFGENK.

It belongs to the CcmE/CycJ family.

The protein localises to the cell inner membrane. In terms of biological role, heme chaperone required for the biogenesis of c-type cytochromes. Transiently binds heme delivered by CcmC and transfers the heme to apo-cytochromes in a process facilitated by CcmF and CcmH. The polypeptide is Cytochrome c-type biogenesis protein CcmE (Glaesserella parasuis serovar 5 (strain SH0165) (Haemophilus parasuis)).